The sequence spans 458 residues: MGRKYFGTDGVRGKVGETPITPEFVMRLGYAAGKVLVSDRGSLPANEHPTVLIGKDTRISGYMLEAALEAGFTAAGVNVLMTGPMPTPAVAYLTRALRLQAGVVISASHNPFEDNGIKFFSASGQKLPDSVEEAIEAALDQPLATVAARQLGRARRIEDAAARYIEFCKSTFPNRLDLRGMRIVVDCAHGATYHVAPHVLHELGAEVVAIGNEPNGFNINEACGATHTPALADAVRAHHADIGISLDGDGDRLMMADAHGRIYDGDQLVYVIARHRLETGYMKGGVVGTLMTNLGTEHALARIHVPFERAKVGDRYVLKRLHANGWFLGGETSGHILCLDKHTTGDGIVSSLQVLRALRETGKTLDAFTADLETYPQVMINVPVVKGFRLSDAAAVTVAVADAESALNGSGRIVLRASGTEPLIRVMVEGRDGDLVRRTAEMIADAVRAAAAASDIAV.

Ser108 acts as the Phosphoserine intermediate in catalysis. Ser108, Asp247, Asp249, and Asp251 together coordinate Mg(2+). A Phosphoserine modification is found at Ser108.

It belongs to the phosphohexose mutase family. Requires Mg(2+) as cofactor. Activated by phosphorylation.

The enzyme catalyses alpha-D-glucosamine 1-phosphate = D-glucosamine 6-phosphate. Functionally, catalyzes the conversion of glucosamine-6-phosphate to glucosamine-1-phosphate. The protein is Phosphoglucosamine mutase of Thiobacillus denitrificans (strain ATCC 25259 / T1).